A 296-amino-acid polypeptide reads, in one-letter code: Cutinase est1 (296 aa).

The N-terminal stretch at 1-35 (MSVTTPRREASLLSRAVAVAAAAAATVALAAPAQA) is a signal peptide. The disordered stretch occupies residues 36-57 (ANPYERGPNPTESMLEARSGPF). Tyr-95 is a binding site for poly(ethylene terephthalate). The active-site Nucleophile is the Ser-165. Poly(ethylene terephthalate)-binding residues include Met-166 and Trp-190. Catalysis depends on charge relay system residues Asp-211 and His-243. Cys-276 and Cys-294 are joined by a disulfide.

It belongs to the AB hydrolase superfamily. Monomer.

It localises to the secreted. Its subcellular location is the periplasm. The catalysed reaction is (ethylene terephthalate)(n) + H2O = (ethylene terephthalate)(n-1) + 4-[(2-hydroxyethoxy)carbonyl]benzoate + H(+). The enzyme catalyses a butanoate ester + H2O = an aliphatic alcohol + butanoate + H(+). It carries out the reaction cutin + H2O = cutin monomers.. Its function is as follows. Catalyzes the hydrolysis of cutin, a polyester that forms the structure of plant cuticle. Shows esterase activity towards p-nitrophenol-linked aliphatic esters (pNP-aliphatic esters). Capable of degrading the plastic poly(ethylene terephthalate) (PET), the most abundant polyester plastic in the world. Can also depolymerize the synthetic polyester poly(epsilon-caprolactone) (PCL). The protein is Cutinase est1 of Thermobifida alba (Thermomonospora alba).